Reading from the N-terminus, the 159-residue chain is SsrA-binding protein (159 aa).

This sequence belongs to the SmpB family.

Its subcellular location is the cytoplasm. Functionally, required for rescue of stalled ribosomes mediated by trans-translation. Binds to transfer-messenger RNA (tmRNA), required for stable association of tmRNA with ribosomes. tmRNA and SmpB together mimic tRNA shape, replacing the anticodon stem-loop with SmpB. tmRNA is encoded by the ssrA gene; the 2 termini fold to resemble tRNA(Ala) and it encodes a 'tag peptide', a short internal open reading frame. During trans-translation Ala-aminoacylated tmRNA acts like a tRNA, entering the A-site of stalled ribosomes, displacing the stalled mRNA. The ribosome then switches to translate the ORF on the tmRNA; the nascent peptide is terminated with the 'tag peptide' encoded by the tmRNA and targeted for degradation. The ribosome is freed to recommence translation, which seems to be the essential function of trans-translation. This chain is SsrA-binding protein, found in Acidiphilium cryptum (strain JF-5).